A 337-amino-acid chain; its full sequence is m7GpppX diphosphatase (337 aa).

The disordered stretch occupies residues 1–37 (MADTAPQPSKRKRERDPEEAEAPSTEEKEARVGNGTS). Residue Ala2 is modified to N-acetylalanine. Residues 10-13 (KRKR) carry the nuclear localization signal (NLS) motif. Ser24 and Ser101 each carry phosphoserine. N6-acetyllysine occurs at positions 138 and 142. A nuclear export sequence (NES) motif is present at residues 142–154 (KYLHQDLHLVRET). Substrate is bound by residues Trp175, Glu185, Asp205, Lys207, and 268–279 (HYLPSYYHLHVH). The short motif at 275–279 (HLHVH) is the Histidine triad motif element. The active-site Nucleophile is His277.

Belongs to the HIT family. In terms of assembly, homodimer. Associates with components of the exosome multienzyme ribonuclease complex, such as EXOSC3 and EXOSC4. Interacts with NDOR1.

Its subcellular location is the cytoplasm. It localises to the nucleus. It carries out the reaction a 5'-end (N(7)-methyl 5'-triphosphoguanosine)-ribonucleoside in mRNA + H2O = N(7)-methyl-GMP + a 5'-end diphospho-ribonucleoside in mRNA + 2 H(+). Its activity is regulated as follows. The hydrolytic product 7-methylguanosine diphosphate (m7GDP) efficiently inhibits the decapping scavenger activity and acts as a competitive inhibitor in vitro. Inhibited by 2,4-diaminoquinazoline. Functionally, decapping scavenger enzyme that catalyzes the cleavage of a residual cap structure following the degradation of mRNAs by the 3'-&gt;5' exosome-mediated mRNA decay pathway. Hydrolyzes cap analog structures like 7-methylguanosine nucleoside triphosphate (m7GpppG) with up to 10 nucleotide substrates (small capped oligoribonucleotides) and specifically releases 5'-phosphorylated RNA fragments and 7-methylguanosine monophosphate (m7GMP). Cleaves cap analog structures like tri-methyl guanosine nucleoside triphosphate (m3(2,2,7)GpppG) with very poor efficiency. Does not hydrolyze unmethylated cap analog (GpppG) and shows no decapping activity on intact m7GpppG-capped mRNA molecules longer than 25 nucleotides. Does not hydrolyze 7-methylguanosine diphosphate (m7GDP) to m7GMP. May also play a role in the 5'-&gt;3 mRNA decay pathway; m7GDP, the downstream product released by the 5'-&gt;3' mRNA mediated decapping activity, may be also converted by DCPS to m7GMP. Binds to m7GpppG and strongly to m7GDP. Plays a role in first intron splicing of pre-mRNAs. Inhibits activation-induced cell death. The sequence is that of m7GpppX diphosphatase (DCPS) from Sus scrofa (Pig).